The primary structure comprises 67 residues: Conotoxin AbVIM (67 aa).

Positions 1–17 (VLIIAVLFLTACQLIAT) are cleaved as a signal peptide. The propeptide occupies 18–40 (ASYARSERKHPDLRLSSRNSKLS). Cystine bridges form between cysteine 43-cysteine 57, cysteine 50-cysteine 61, and cysteine 56-cysteine 66.

This sequence belongs to the conotoxin O1 superfamily. As to expression, expressed by the venom duct.

The protein localises to the secreted. The protein is Conotoxin AbVIM of Conus abbreviatus (Abbreviated cone).